A 188-amino-acid polypeptide reads, in one-letter code: Putative 3-methyladenine DNA glycosylase (188 aa).

It belongs to the DNA glycosylase MPG family.

The sequence is that of Putative 3-methyladenine DNA glycosylase from Ehrlichia ruminantium (strain Gardel).